We begin with the raw amino-acid sequence, 97 residues long: Large ribosomal subunit protein eL21 (97 aa).

The disordered stretch occupies residues 1–26 (MQKSEGFRSKTRYKLQKHPRQKGMAP). Positions 9–21 (SKTRYKLQKHPRQ) are enriched in basic residues.

Belongs to the eukaryotic ribosomal protein eL21 family.

In Methanococcus maripaludis (strain C5 / ATCC BAA-1333), this protein is Large ribosomal subunit protein eL21.